The following is a 233-amino-acid chain: Phosphoribosylformylglycinamidine synthase subunit PurQ (233 aa).

Residues 3 to 233 form the Glutamine amidotransferase type-1 domain; the sequence is SAVLVFPGIN…GLVAHLERAA (231 aa). Cys-87 serves as the catalytic Nucleophile. Residues His-204 and Glu-206 contribute to the active site.

In terms of assembly, part of the FGAM synthase complex composed of 1 PurL, 1 PurQ and 2 PurS subunits.

It localises to the cytoplasm. The catalysed reaction is N(2)-formyl-N(1)-(5-phospho-beta-D-ribosyl)glycinamide + L-glutamine + ATP + H2O = 2-formamido-N(1)-(5-O-phospho-beta-D-ribosyl)acetamidine + L-glutamate + ADP + phosphate + H(+). It carries out the reaction L-glutamine + H2O = L-glutamate + NH4(+). It participates in purine metabolism; IMP biosynthesis via de novo pathway; 5-amino-1-(5-phospho-D-ribosyl)imidazole from N(2)-formyl-N(1)-(5-phospho-D-ribosyl)glycinamide: step 1/2. Part of the phosphoribosylformylglycinamidine synthase complex involved in the purines biosynthetic pathway. Catalyzes the ATP-dependent conversion of formylglycinamide ribonucleotide (FGAR) and glutamine to yield formylglycinamidine ribonucleotide (FGAM) and glutamate. The FGAM synthase complex is composed of three subunits. PurQ produces an ammonia molecule by converting glutamine to glutamate. PurL transfers the ammonia molecule to FGAR to form FGAM in an ATP-dependent manner. PurS interacts with PurQ and PurL and is thought to assist in the transfer of the ammonia molecule from PurQ to PurL. The sequence is that of Phosphoribosylformylglycinamidine synthase subunit PurQ from Nitrobacter winogradskyi (strain ATCC 25391 / DSM 10237 / CIP 104748 / NCIMB 11846 / Nb-255).